Consider the following 179-residue polypeptide: dCTP deaminase (179 aa).

DCTP-binding positions include 101–106 (RSTLAR) and D117. E127 (proton donor/acceptor) is an active-site residue. Q165 is a dCTP binding site.

Belongs to the dCTP deaminase family. In terms of assembly, homotrimer.

The catalysed reaction is dCTP + H2O + H(+) = dUTP + NH4(+). It functions in the pathway pyrimidine metabolism; dUMP biosynthesis; dUMP from dCTP (dUTP route): step 1/2. Its function is as follows. Catalyzes the deamination of dCTP to dUTP. This is dCTP deaminase from Caldivirga maquilingensis (strain ATCC 700844 / DSM 13496 / JCM 10307 / IC-167).